We begin with the raw amino-acid sequence, 379 residues long: Trans-prenyltransferase abpB (379 aa).

Substrate-binding positions include 90–91 (RL), arginine 112, lysine 197, arginine 264, lysine 266, tyrosine 268, and tyrosine 338.

Belongs to the tryptophan dimethylallyltransferase family.

It catalyses the reaction aspulvinone E + 2 dimethylallyl diphosphate = aspulvinone H + 2 diphosphate. It carries out the reaction butyrolactone II + dimethylallyl diphosphate = butyrolactone I + diphosphate. The protein operates within secondary metabolite biosynthesis. Its function is as follows. Trans-prenyltransferase that acts in both the aspulvinones and butyrolactones pathways. Prenylates aspulvinone E and butyrolactone II to yield repectively aspulvinone H and butyrolactone I. This Aspergillus terreus (strain NIH 2624 / FGSC A1156) protein is Trans-prenyltransferase abpB.